Consider the following 183-residue polypeptide: DNA-directed RNA polymerase subunit Rpo7 (183 aa).

The region spanning 82-164 (HEVIEGEVSQ…RLPRIALTMK (83 aa)) is the S1 motif domain.

Belongs to the eukaryotic RPB7/RPC8 RNA polymerase subunit family. Part of the 13-subunit RNA polymerase complex. Forms a stalk with Rpo4 that extends from the main structure.

Its subcellular location is the cytoplasm. It catalyses the reaction RNA(n) + a ribonucleoside 5'-triphosphate = RNA(n+1) + diphosphate. In terms of biological role, DNA-dependent RNA polymerase (RNAP) catalyzes the transcription of DNA into RNA using the four ribonucleoside triphosphates as substrates. Functionally, reconstitution experiments show this subunit is required for basic activity. The protein is DNA-directed RNA polymerase subunit Rpo7 of Sulfolobus acidocaldarius (strain ATCC 33909 / DSM 639 / JCM 8929 / NBRC 15157 / NCIMB 11770).